Here is a 429-residue protein sequence, read N- to C-terminus: MRTCGTSSEGQDECCLYGLSAMQGWRISMEDAHAAVLDLQAKSTGGSEKPTDPDKRLAFFGVYDGHGGDKVALFAGENVHKIVAKQEAFAKGDIEQALKDGFLATDRAILEDPKYEEEVSGCTAAVSVISKNKIWVANAGDSRSVLGVKGRAKPLSFDHKPQNEGEKARISAAGGFVDFGRVNGNLALSRAIGDFEFKKSPELSPEQQIVTAYPDVTVHEVTDDDEFLVIACDGIWDCQSSQSVVEFVRRGIAAKQELYRICENMMDNCLASNSETGGVGCDNMTMIIIGLLNGKTKEEWYNQISERVANGDGPCAPPEYGKSEFRGPGIRNQFEETPDNYDLENDRSRGFSVRSGRIILLGDGTELIPEQNDEELFDQREENRDVTNHLQHDKAEETSTAANLSESPSSANKNSSGSGTEATEKSASS.

One can recognise a PPM-type phosphatase domain in the interval 16-291; that stretch reads LYGLSAMQGW…DNMTMIIIGL (276 aa). Mn(2+)-binding residues include aspartate 64, glycine 65, aspartate 233, and aspartate 282. Disordered regions lie at residues 320–348 and 384–429; these read YGKS…NDRS and RDVT…SASS. Residues 384 to 397 show a composition bias toward basic and acidic residues; that stretch reads RDVTNHLQHDKAEE. Low complexity predominate over residues 405-419; sequence SESPSSANKNSSGSG.

This sequence belongs to the PP2C family. Requires Mg(2+) as cofactor. The cofactor is Mn(2+).

The protein resides in the cytoplasm. It localises to the nucleus. It catalyses the reaction O-phospho-L-seryl-[protein] + H2O = L-seryl-[protein] + phosphate. It carries out the reaction O-phospho-L-threonyl-[protein] + H2O = L-threonyl-[protein] + phosphate. Functionally, dephosphorylating regulator for many key proteins. Dephosphorylates sakA, to negatively regulate the stress-activated p38MAPK cascade. The protein is Protein phosphatase 2C homolog 2 of Aspergillus fumigatus (strain ATCC MYA-4609 / CBS 101355 / FGSC A1100 / Af293) (Neosartorya fumigata).